We begin with the raw amino-acid sequence, 388 residues long: Processive diacylglycerol beta-glucosyltransferase (388 aa).

This sequence belongs to the glycosyltransferase 28 family. UgtP subfamily.

The protein localises to the cell membrane. It catalyses the reaction a 1,2-diacyl-3-O-(beta-D-glucopyranosyl)-sn-glycerol + UDP-alpha-D-glucose = a 1,2-diacyl-3-O-(beta-D-Glc-(1-&gt;6)-beta-D-Glc)-sn-glycerol + UDP + H(+). It carries out the reaction a 1,2-diacyl-3-O-(beta-D-Glc-(1-&gt;6)-beta-D-Glc)-sn-glycerol + UDP-alpha-D-glucose = a 1,2-diacyl-3-O-(beta-D-Glc-(1-&gt;6)-beta-D-Glc-(1-&gt;6)-beta-D-Glc)-sn-glycerol + UDP + H(+). The enzyme catalyses a 1,2-diacyl-sn-glycerol + UDP-alpha-D-glucose = a 1,2-diacyl-3-O-(beta-D-glucopyranosyl)-sn-glycerol + UDP + H(+). Its pathway is glycolipid metabolism; diglucosyl-diacylglycerol biosynthesis. Its function is as follows. Processive glucosyltransferase involved in the biosynthesis of both the bilayer- and non-bilayer-forming membrane glucolipids. Is able to successively transfer up to three glucosyl residues to diacylglycerol (DAG), thereby catalyzing the formation of beta-monoglucosyl-DAG (3-O-(beta-D-glucopyranosyl)-1,2-diacyl-sn-glycerol), beta-diglucosyl-DAG (3-O-(beta-D-glucopyranosyl-beta-(1-&gt;6)-D-glucopyranosyl)-1,2-diacyl-sn-glycerol) and beta-triglucosyl-DAG (3-O-(beta-D-glucopyranosyl-beta-(1-&gt;6)-D-glucopyranosyl-beta-(1-&gt;6)-D-glucopyranosyl)-1,2-diacyl-sn-glycerol). Beta-diglucosyl-DAG is the predominant glycolipid found in Bacillales and is also used as a membrane anchor for lipoteichoic acid (LTA). This is Processive diacylglycerol beta-glucosyltransferase from Bacillus cytotoxicus (strain DSM 22905 / CIP 110041 / 391-98 / NVH 391-98).